We begin with the raw amino-acid sequence, 211 residues long: Large ribosomal subunit protein uL3 (211 aa).

Residues 126-147 form a disordered region; that stretch reads HGQSRGPMAHGSRYHRRPGSMG.

The protein belongs to the universal ribosomal protein uL3 family. As to quaternary structure, part of the 50S ribosomal subunit. Forms a cluster with proteins L14 and L19.

Functionally, one of the primary rRNA binding proteins, it binds directly near the 3'-end of the 23S rRNA, where it nucleates assembly of the 50S subunit. This chain is Large ribosomal subunit protein uL3, found in Geobacillus thermodenitrificans (strain NG80-2).